A 162-amino-acid chain; its full sequence is Putative 4-hydroxy-4-methyl-2-oxoglutarate aldolase (162 aa).

Residues 75–78 (GDML) and R97 each bind substrate. D98 provides a ligand contact to a divalent metal cation.

The protein belongs to the class II aldolase/RraA-like family. As to quaternary structure, homotrimer. A divalent metal cation serves as cofactor.

It carries out the reaction 4-hydroxy-4-methyl-2-oxoglutarate = 2 pyruvate. It catalyses the reaction oxaloacetate + H(+) = pyruvate + CO2. Functionally, catalyzes the aldol cleavage of 4-hydroxy-4-methyl-2-oxoglutarate (HMG) into 2 molecules of pyruvate. Also contains a secondary oxaloacetate (OAA) decarboxylase activity due to the common pyruvate enolate transition state formed following C-C bond cleavage in the retro-aldol and decarboxylation reactions. The polypeptide is Putative 4-hydroxy-4-methyl-2-oxoglutarate aldolase (Azotobacter vinelandii (strain DJ / ATCC BAA-1303)).